We begin with the raw amino-acid sequence, 473 residues long: Photosystem II CP43 reaction center protein (473 aa).

Residues 1-14 (MKTLYSLRRFYPVE) constitute a propeptide that is removed on maturation. The residue at position 15 (Thr-15) is an N-acetylthreonine. A Phosphothreonine modification is found at Thr-15. Transmembrane regions (helical) follow at residues 69 to 93 (LFEV…PHLA), 134 to 155 (LIGP…KDKN), 178 to 200 (KALY…RKIT), 255 to 275 (KPFA…LSYS), and 291 to 312 (WFNN…ASQA). Residue Glu-367 participates in [CaMn4O5] cluster binding. The helical transmembrane segment at 447–471 (RARAAAAGFEKGIDRDTEPVLSMTP) threads the bilayer.

The protein belongs to the PsbB/PsbC family. PsbC subfamily. In terms of assembly, PSII is composed of 1 copy each of membrane proteins PsbA, PsbB, PsbC, PsbD, PsbE, PsbF, PsbH, PsbI, PsbJ, PsbK, PsbL, PsbM, PsbT, PsbX, PsbY, PsbZ, Psb30/Ycf12, at least 3 peripheral proteins of the oxygen-evolving complex and a large number of cofactors. It forms dimeric complexes. Binds multiple chlorophylls and provides some of the ligands for the Ca-4Mn-5O cluster of the oxygen-evolving complex. It may also provide a ligand for a Cl- that is required for oxygen evolution. PSII binds additional chlorophylls, carotenoids and specific lipids. serves as cofactor.

It is found in the plastid. Its subcellular location is the chloroplast thylakoid membrane. In terms of biological role, one of the components of the core complex of photosystem II (PSII). It binds chlorophyll and helps catalyze the primary light-induced photochemical processes of PSII. PSII is a light-driven water:plastoquinone oxidoreductase, using light energy to abstract electrons from H(2)O, generating O(2) and a proton gradient subsequently used for ATP formation. In Angiopteris evecta (Mule's foot fern), this protein is Photosystem II CP43 reaction center protein.